We begin with the raw amino-acid sequence, 151 residues long: Deoxyuridine 5'-triphosphate nucleotidohydrolase (151 aa).

Residues 70-72 (RSG), Asn-83, and 87-89 (LID) each bind substrate.

Belongs to the dUTPase family. Mg(2+) serves as cofactor.

It catalyses the reaction dUTP + H2O = dUMP + diphosphate + H(+). Its pathway is pyrimidine metabolism; dUMP biosynthesis; dUMP from dCTP (dUTP route): step 2/2. Its function is as follows. This enzyme is involved in nucleotide metabolism: it produces dUMP, the immediate precursor of thymidine nucleotides and it decreases the intracellular concentration of dUTP so that uracil cannot be incorporated into DNA. The chain is Deoxyuridine 5'-triphosphate nucleotidohydrolase from Methylococcus capsulatus (strain ATCC 33009 / NCIMB 11132 / Bath).